A 234-amino-acid chain; its full sequence is Prolactin-6A1 (234 aa).

A signal peptide spans 1–33; sequence MVKSWLRMSKKMEAGTLLMLLMSNILLWENVAS. Asn61 is a glycosylation site (N-linked (GlcNAc...) asparagine). 2 disulfides stabilise this stretch: Cys93/Cys209 and Cys226/Cys234.

It belongs to the somatotropin/prolactin family.

It is found in the secreted. This Rattus norvegicus (Rat) protein is Prolactin-6A1 (Prl6a1).